The following is a 333-amino-acid chain: GTPase Obg (333 aa).

The Obg domain occupies 1-159; that stretch reads MKFIDEATIT…ATVRLELKLL (159 aa). Positions 63 to 85 are disordered; sequence KQFAAPNGAPGEGRQKTGKSGDD. Residues 75 to 84 show a composition bias toward basic and acidic residues; that stretch reads GRQKTGKSGD. The region spanning 160–329 is the OBG-type G domain; sequence ADVGLIGLPN…LKKHLFELLC (170 aa). GTP-binding positions include 166–173, 191–195, 213–216, 283–286, and 310–312; these read GLPNAGKS, FTTLS, DIPG, NKMD, and SAA. Ser173 and Thr193 together coordinate Mg(2+).

This sequence belongs to the TRAFAC class OBG-HflX-like GTPase superfamily. OBG GTPase family. In terms of assembly, monomer. Mg(2+) is required as a cofactor.

The protein resides in the cytoplasm. In terms of biological role, an essential GTPase which binds GTP, GDP and possibly (p)ppGpp with moderate affinity, with high nucleotide exchange rates and a fairly low GTP hydrolysis rate. Plays a role in control of the cell cycle, stress response, ribosome biogenesis and in those bacteria that undergo differentiation, in morphogenesis control. This Desulfosudis oleivorans (strain DSM 6200 / JCM 39069 / Hxd3) (Desulfococcus oleovorans) protein is GTPase Obg.